Here is a 1549-residue protein sequence, read N- to C-terminus: Zinc finger MYM-type protein 4 (1549 aa).

The residue at position 2 (Ala2) is an N-acetylalanine. The interval 83 to 108 (VVSSDNEDEQDCSSKDNLVSSVHTDG) is disordered. The span at 97–106 (KDNLVSSVHT) shows a compositional bias: polar residues. Thr106 is modified (phosphothreonine). A phosphoserine mark is found at Ser109 and Ser121. Glycyl lysine isopeptide (Lys-Gly) (interchain with G-Cter in SUMO2) cross-links involve residues Lys139 and Lys148. At Ser161 the chain carries Phosphoserine. A Glycyl lysine isopeptide (Lys-Gly) (interchain with G-Cter in SUMO2) cross-link involves residue Lys195. Ser197 is modified (phosphoserine). Residues Lys201 and Lys232 each participate in a glycyl lysine isopeptide (Lys-Gly) (interchain with G-Cter in SUMO2) cross-link. At Ser242 the chain carries Phosphoserine. A Glycyl lysine isopeptide (Lys-Gly) (interchain with G-Cter in SUMO1); alternate cross-link involves residue Lys250. Lys250 participates in a covalent cross-link: Glycyl lysine isopeptide (Lys-Gly) (interchain with G-Cter in SUMO2); alternate. A disordered region spans residues 267 to 291 (GLLDRVKDEPDNAQEYSHGQQQKTQ). Glycyl lysine isopeptide (Lys-Gly) (interchain with G-Cter in SUMO2) cross-links involve residues Lys273, Lys289, Lys327, Lys400, Lys428, and Lys430. Over residues 280-290 (QEYSHGQQQKT) the composition is skewed to polar residues. MYM-type zinc fingers lie at residues 362 to 402 (QLFC…PKDV), 414 to 457 (KDFC…RHEV), 464 to 499 (HKLCSDACFSKFRSANNLTMNCCENCGGYCYSGSGQ), 510 to 544 (KKFCSSMCVTSYKQKSAKITPCALCKSLRSSAEMI), 554 to 592 (ELFCSVNCLSAYRVKMVTSAGVQVQCNSCKTSAIPQYHL), 600 to 631 (RNFCSYSCVVAFQNLFNKPTGMNSSVVPLSQG), 708 to 742 (FQFCGKNCCDEYKKINNVMAMCEYCKIEKIIKETV), 749 to 788 (KSFCSEGCKLLYKHDLGKRWGSHCKMCSYCLQTSPKLIQN), and 795 to 829 (EDFCCEECMSKYTVLFYQMAKCDGCKRQGKLSESL). Residues Lys1035 and Lys1062 each participate in a glycyl lysine isopeptide (Lys-Gly) (interchain with G-Cter in SUMO2) cross-link. Phosphoserine occurs at positions 1065 and 1072. Residues Lys1081 and Lys1128 each participate in a glycyl lysine isopeptide (Lys-Gly) (interchain with G-Cter in SUMO2) cross-link. The segment at 1124 to 1185 (DSELKPFSKG…RRGRKKSVVP (62 aa)) is disordered. The span at 1125–1135 (SELKPFSKGET) shows a compositional bias: basic and acidic residues. Residues 1161–1182 (SRTRRRHRDGFPQPRRRGRKKS) show a composition bias toward basic residues. Phosphoserine occurs at positions 1182 and 1257. A Glycyl lysine isopeptide (Lys-Gly) (interchain with G-Cter in SUMO2) cross-link involves residue Lys1432. Phosphoserine occurs at positions 1540, 1543, and 1548.

Plays a role in the regulation of cell morphology and cytoskeletal organization. The polypeptide is Zinc finger MYM-type protein 4 (Zmym4) (Mus musculus (Mouse)).